Reading from the N-terminus, the 348-residue chain is Probable dual-specificity RNA methyltransferase RlmN (348 aa).

The Proton acceptor role is filled by Glu-92. Positions 98–331 constitute a Radical SAM core domain; the sequence is HPDRVTACIS…NEIRREKGTD (234 aa). An intrachain disulfide couples Cys-105 to Cys-336. Positions 112, 116, and 119 each coordinate [4Fe-4S] cluster. Residues 159-160, Ser-191, 214-216, and Asn-290 contribute to the S-adenosyl-L-methionine site; these read GE and SLH. Cys-336 functions as the S-methylcysteine intermediate in the catalytic mechanism.

It belongs to the radical SAM superfamily. RlmN family. [4Fe-4S] cluster is required as a cofactor.

The protein resides in the cytoplasm. The enzyme catalyses adenosine(2503) in 23S rRNA + 2 reduced [2Fe-2S]-[ferredoxin] + 2 S-adenosyl-L-methionine = 2-methyladenosine(2503) in 23S rRNA + 5'-deoxyadenosine + L-methionine + 2 oxidized [2Fe-2S]-[ferredoxin] + S-adenosyl-L-homocysteine. It carries out the reaction adenosine(37) in tRNA + 2 reduced [2Fe-2S]-[ferredoxin] + 2 S-adenosyl-L-methionine = 2-methyladenosine(37) in tRNA + 5'-deoxyadenosine + L-methionine + 2 oxidized [2Fe-2S]-[ferredoxin] + S-adenosyl-L-homocysteine. Its function is as follows. Specifically methylates position 2 of adenine 2503 in 23S rRNA and position 2 of adenine 37 in tRNAs. This is Probable dual-specificity RNA methyltransferase RlmN from Fervidobacterium nodosum (strain ATCC 35602 / DSM 5306 / Rt17-B1).